The following is a 403-amino-acid chain: Phosphopentomutase (403 aa).

The Mn(2+) site is built by D13, D298, H303, D339, H340, and H351.

The protein belongs to the phosphopentomutase family. The cofactor is Mn(2+).

It is found in the cytoplasm. The catalysed reaction is 2-deoxy-alpha-D-ribose 1-phosphate = 2-deoxy-D-ribose 5-phosphate. It catalyses the reaction alpha-D-ribose 1-phosphate = D-ribose 5-phosphate. It participates in carbohydrate degradation; 2-deoxy-D-ribose 1-phosphate degradation; D-glyceraldehyde 3-phosphate and acetaldehyde from 2-deoxy-alpha-D-ribose 1-phosphate: step 1/2. Functionally, isomerase that catalyzes the conversion of deoxy-ribose 1-phosphate (dRib-1-P) and ribose 1-phosphate (Rib-1-P) to deoxy-ribose 5-phosphate (dRib-5-P) and ribose 5-phosphate (Rib-5-P), respectively. The chain is Phosphopentomutase from Streptococcus pyogenes serotype M28 (strain MGAS6180).